The following is a 246-amino-acid chain: Allergin-1 (246 aa).

The N-terminal stretch at 1–33 (MGDGDSPMCLSAVSFKGIRCWLDKLLLWALTIS) is a signal peptide. At 34-150 (ITLQNAAVDC…DESCPSCRLS (117 aa)) the chain is on the extracellular side. The region spanning 52 to 131 (PSPNLNSSMN…VNVSNLMKYS (80 aa)) is the Ig-like C2-type domain. The N-linked (GlcNAc...) asparagine glycan is linked to asparagine 68. Cysteine 73 and cysteine 120 are oxidised to a cystine. The chain crosses the membrane as a helical span at residues 151 to 171 (LLLPGLLLGILVIVLVLAYLI). The Cytoplasmic segment spans residues 172–246 (HLKYKKGKKT…ADYIYSELTH (75 aa)). Short sequence motifs (ITIM motif) lie at residues 214 to 219 (IHYATP) and 239 to 244 (YIYSEL). Residues tyrosine 216 and tyrosine 241 each carry the phosphotyrosine modification.

Monomer. Interacts (tyrosine-phosphorylated) with PTPN6, PTPN11 and INPP5D. Post-translationally, N-glycosylated. Expressed in myeloid cells (dendritic cells, macrophages and neutrophils but not in T-cells, B-cells or natural killer cells) and mast cells (at protein level).

The protein resides in the cell membrane. It localises to the secreted. In terms of biological role, immunoglobulin-like receptor which plays an inhibitory role in degranulation of mast cells. Negatively regulates IgE-mediated mast cell activation and suppresses the type I immediate hypersensitivity reaction. The protein is Allergin-1 (Milr1) of Mus musculus (Mouse).